The sequence spans 209 residues: MENGKRDRQDMEVNTTPRKPRVLLAASGSVAAIKFGNLCHCFTEWAEVRAVVTKSSLHFLDKLSLPQEVTLYTDEDEWSSWNKIGDPVLHIELRRWADVLVIAPLSANTLGKIAGGLCDNLLTCIIRAWDYTKPLFVAPAMNTLMWNNPFTERHLLSLDELGITLIPPIKKRLACGDYGNGAMAEPSLIYSTVRLFWESQAHQQTGGTS.

FMN-binding positions include 28–30 and 53–55; these read GSV and TKS. His-90 acts as the Proton donor in catalysis. FMN is bound by residues 106–109 and Ala-140; that span reads SANT. The N-[(R)-4-phosphopantothenoyl]-L-cysteine site is built by Asn-142, Arg-172, and Ala-174. Catalysis depends on Cys-175, which acts as the Proton donor. Met-183 is an N-[(R)-4-phosphopantothenoyl]-L-cysteine binding site.

Belongs to the HFCD (homooligomeric flavin containing Cys decarboxylase) superfamily. As to quaternary structure, homotrimer. FMN serves as cofactor. In terms of tissue distribution, expressed in roots, shoots, leaves, flowers, developing siliques and seeds with highest expression in seed embryos and phloem.

It carries out the reaction N-[(R)-4-phosphopantothenoyl]-L-cysteine + H(+) = (R)-4'-phosphopantetheine + CO2. It functions in the pathway cofactor biosynthesis; coenzyme A biosynthesis; CoA from (R)-pantothenate: step 3/5. Its function is as follows. Involved in plant growth, and salt and osmotic tolerance. Catalyzes the decarboxylation of 4'-phosphopantothenoylcysteine to 4'-phosphopantetheine, a key step in coenzyme A biosynthesis. The enzyme is also able to decarboxylate pantothenoylcysteine to pantothenoylcysteamine. This chain is Phosphopantothenoylcysteine decarboxylase, found in Arabidopsis thaliana (Mouse-ear cress).